Reading from the N-terminus, the 189-residue chain is MARLCAFLMVLAVLSYWPTCSLGCDLPQTHNLRNKRALTLLVKMRRLSPLSCLKDRKDFGFPQEKVGAQQIQEAQAIPVLTELTQQILTLFTSKDSSAAWNATLLDSFCNDLHQLLNDLQGCLMQQVEIQALPLTQEDSLLAVRTYFHRITVFLREKKHSPCAWEVVRAEVWRALSSSAKLLARLNEDE.

The first 23 residues, 1–23 (MARLCAFLMVLAVLSYWPTCSLG), serve as a signal peptide directing secretion. 2 disulfide bridges follow: cysteine 24–cysteine 122 and cysteine 52–cysteine 162. N-linked (GlcNAc...) asparagine glycosylation is present at asparagine 101.

The protein belongs to the alpha/beta interferon family.

The protein resides in the secreted. Produced by macrophages, IFN-alpha have antiviral activities. Interferon stimulates the production of two enzymes: a protein kinase and an oligoadenylate synthetase. The protein is Interferon alpha-6 (Ifna6) of Mus musculus (Mouse).